Here is a 145-residue protein sequence, read N- to C-terminus: uncharacterized protein (145 aa).

The tract at residues 71-95 (GARGRGRTYTKGGSSRSPASWAEQG) is disordered.

This is an uncharacterized protein from Homo sapiens (Human).